The following is a 314-amino-acid chain: tRNA pseudouridine synthase B (314 aa).

Substrate is bound at residue H43. D48 serves as the catalytic Nucleophile. Substrate is bound by residues Y76, Y179, and L200.

Belongs to the pseudouridine synthase TruB family. Type 1 subfamily.

The catalysed reaction is uridine(55) in tRNA = pseudouridine(55) in tRNA. Its function is as follows. Responsible for synthesis of pseudouridine from uracil-55 in the psi GC loop of transfer RNAs. This is tRNA pseudouridine synthase B from Shigella flexneri.